The following is a 234-amino-acid chain: ADTIVAVELDTYPNTDIGDPSYQHIGINIKSIRSKATTRWDVQNGKVGTAHISYNSVAKRLSAVVSYPGGSSATVSYDVDLNNILPEWVRVGLSASTGLYKETNTILSWSFTSKSNSTADAQSLHFTFNQFSQSPKDLILQGDASTDSDGNLQLTRVSNGSPQSDSVGRALYYAPVHIWDKSAVVASFDATFTFLIKSPDREIADGIAFFIANTDSSIPHGSGGRLLGLFPDAN.

Mn(2+) contacts are provided by E8 and D10. Residues D10, Y12, N14, and D19 each coordinate Ca(2+). An a carbohydrate-binding site is contributed by Y12. Residues D19, H24, and S34 each coordinate Mn(2+). A carbohydrate is bound at residue 99-100; that stretch reads LY. D205 lines the Ca(2+) pocket. R225 is a binding site for a carbohydrate.

It belongs to the leguminous lectin family. In terms of assembly, homotetramer. The alpha and beta chains are produced by partial proteolytic processing of the lectin precursor by an asparaginyl endopeptidase.

Its function is as follows. Glucose/D-mannose specific lectin. In Cratylia mollis (Camaratu bean), this protein is Mannose/glucose-specific lectin Cramoll.